We begin with the raw amino-acid sequence, 567 residues long: Protein NRT1/ PTR FAMILY 4.5 (567 aa).

A run of 12 helical transmembrane segments spans residues 30 to 50, 70 to 92, 99 to 118, 147 to 167, 189 to 209, 219 to 239, 326 to 346, 374 to 394, 411 to 431, 448 to 468, 491 to 511, and 535 to 555; these read GMLA…AFLA, SSSE…GFLA, FVIF…LLTI, AFLF…KGSL, FFNY…TFVV, WGFG…LLGS, IVLK…CLAQ, VFPV…IIPF, IGVG…VELK, LPIT…ADLF, SLSW…VPIV, and LFYW…LFWA.

It belongs to the major facilitator superfamily. Proton-dependent oligopeptide transporter (POT/PTR) (TC 2.A.17) family. Expressed in flowers and siliques.

It is found in the membrane. Involved in abscisic acid transport. This is Protein NRT1/ PTR FAMILY 4.5 (NPF4.5) from Arabidopsis thaliana (Mouse-ear cress).